Reading from the N-terminus, the 179-residue chain is ATP synthase subunit delta (179 aa).

This sequence belongs to the ATPase delta chain family. In terms of assembly, F-type ATPases have 2 components, F(1) - the catalytic core - and F(0) - the membrane proton channel. F(1) has five subunits: alpha(3), beta(3), gamma(1), delta(1), epsilon(1). F(0) has three main subunits: a(1), b(2) and c(10-14). The alpha and beta chains form an alternating ring which encloses part of the gamma chain. F(1) is attached to F(0) by a central stalk formed by the gamma and epsilon chains, while a peripheral stalk is formed by the delta and b chains.

Its subcellular location is the cell membrane. F(1)F(0) ATP synthase produces ATP from ADP in the presence of a proton or sodium gradient. F-type ATPases consist of two structural domains, F(1) containing the extramembraneous catalytic core and F(0) containing the membrane proton channel, linked together by a central stalk and a peripheral stalk. During catalysis, ATP synthesis in the catalytic domain of F(1) is coupled via a rotary mechanism of the central stalk subunits to proton translocation. In terms of biological role, this protein is part of the stalk that links CF(0) to CF(1). It either transmits conformational changes from CF(0) to CF(1) or is implicated in proton conduction. This Staphylococcus aureus (strain USA300 / TCH1516) protein is ATP synthase subunit delta.